The primary structure comprises 151 residues: SsrA-binding protein (151 aa).

The protein belongs to the SmpB family.

Its subcellular location is the cytoplasm. In terms of biological role, required for rescue of stalled ribosomes mediated by trans-translation. Binds to transfer-messenger RNA (tmRNA), required for stable association of tmRNA with ribosomes. tmRNA and SmpB together mimic tRNA shape, replacing the anticodon stem-loop with SmpB. tmRNA is encoded by the ssrA gene; the 2 termini fold to resemble tRNA(Ala) and it encodes a 'tag peptide', a short internal open reading frame. During trans-translation Ala-aminoacylated tmRNA acts like a tRNA, entering the A-site of stalled ribosomes, displacing the stalled mRNA. The ribosome then switches to translate the ORF on the tmRNA; the nascent peptide is terminated with the 'tag peptide' encoded by the tmRNA and targeted for degradation. The ribosome is freed to recommence translation, which seems to be the essential function of trans-translation. The polypeptide is SsrA-binding protein (Chlamydia trachomatis serovar A (strain ATCC VR-571B / DSM 19440 / HAR-13)).